Reading from the N-terminus, the 162-residue chain is Large ribosomal subunit protein bL9 (162 aa).

It belongs to the bacterial ribosomal protein bL9 family.

Binds to the 23S rRNA. The protein is Large ribosomal subunit protein bL9 of Chlorobaculum parvum (strain DSM 263 / NCIMB 8327) (Chlorobium vibrioforme subsp. thiosulfatophilum).